The sequence spans 270 residues: Probable septum site-determining protein MinC (270 aa).

The interval 105 to 129 (DRRAPSSKAADEAPVQQAEPAAPAA) is disordered. Low complexity predominate over residues 116 to 129 (EAPVQQAEPAAPAA).

Belongs to the MinC family. Interacts with MinD and FtsZ.

In terms of biological role, cell division inhibitor that blocks the formation of polar Z ring septums. Rapidly oscillates between the poles of the cell to destabilize FtsZ filaments that have formed before they mature into polar Z rings. Prevents FtsZ polymerization. This Burkholderia pseudomallei (strain 1106a) protein is Probable septum site-determining protein MinC.